The chain runs to 367 residues: Innexin inx4 (367 aa).

Over 1–21 (MYAAVKPLSKYLQFKSVHIYD) the chain is Cytoplasmic. Residues 22 to 42 (AIFTLHSKVTVALLLACTFLL) traverse the membrane as a helical segment. The Extracellular segment spans residues 43–110 (SSKQYFGDPI…PENRNYITYY (68 aa)). Residues 111–131 (QWVVLVLLLESFVFYMPAFLW) form a helical membrane-spanning segment. The Cytoplasmic segment spans residues 132–186 (KIWEGGRLKHLCDDFHKMAVCKDKSRTHLRVLVNYFSSDYKETHFRYFVSYVFCE). The chain crosses the membrane as a helical span at residues 187–207 (ILNLSISILNFLLLDVFFGGF). The Extracellular portion of the chain corresponds to 208–268 (WGRYRNALLS…LLPLNILNEK (61 aa)). The chain crosses the membrane as a helical span at residues 269–289 (IFAFLWIWFILVAMLISLKFL). The Cytoplasmic portion of the chain corresponds to 290–367 (YRLATVLYPG…IKIPPGADKI (78 aa)).

This sequence belongs to the pannexin family. As to expression, expressed in nurse cells and oocyte during oogenesis. Uniform expression in imaginal wing disk and low expression in developing imaginal CNS. Expressed in embryonic pole cells and primordial germ cells.

It is found in the cell membrane. The protein resides in the cell junction. It localises to the gap junction. Its function is as follows. Structural component of the gap junctions in germline cells. Required for differentiation and survival of germline cysts in females and of spermatogonia in males; gap junctional communication between spermatogonia and somatic cyst cells may be required for normal differentiation and survival of spermatogonia. The chain is Innexin inx4 (zpg) from Drosophila melanogaster (Fruit fly).